The following is a 104-amino-acid chain: Synaptic plasticity regulator PANTS (104 aa).

The segment at 58-104 (RRSAEAQADSLPPGPEGEPRVAGAGPNAVTGILTRNQGTERPHGDTR) is disordered. Residues 95–104 (GTERPHGDTR) are compositionally biased toward basic and acidic residues.

The protein belongs to the UPF0545 family. In terms of assembly, interacts with RTN4 isoform A/Nogo-A; the interaction results in enhanced RTN4-mediated inhibition of AMPA receptor clustering. Also interacts with NCAM1, RANBP2 and CCT8. Rapidly degraded by proteolysis following neuronal stimulation, resulting in increased AMPA receptor clustering.

Its subcellular location is the synapse. The protein localises to the synaptic cleft. In terms of biological role, negatively regulates long-term potentiation and modulates adult synaptic plasticity. Stabilizes the interaction of RTN4 isoform A/Nogo-A with its receptors, inhibiting clustering of postsynaptic AMPA receptors at synaptic sites. Upon neuronal stimulation, degraded at synapses, reducing RTN4 signaling and allowing AMPA receptor clustering at individual synapses. The protein is Synaptic plasticity regulator PANTS of Bos taurus (Bovine).